Here is a 390-residue protein sequence, read N- to C-terminus: Chorismate synthase 1 (390 aa).

2 residues coordinate NADP(+): arginine 39 and arginine 45. Residues 95-117 (EQEEKEMKRKVTKPRPGHADLNG) are disordered. Residues 132-134 (RSS), 253-254 (NA), glycine 298, 313-317 (KPIPT), and arginine 339 each bind FMN.

This sequence belongs to the chorismate synthase family. As to quaternary structure, homotetramer. FMNH2 serves as cofactor.

The enzyme catalyses 5-O-(1-carboxyvinyl)-3-phosphoshikimate = chorismate + phosphate. It participates in metabolic intermediate biosynthesis; chorismate biosynthesis; chorismate from D-erythrose 4-phosphate and phosphoenolpyruvate: step 7/7. Functionally, catalyzes the anti-1,4-elimination of the C-3 phosphate and the C-6 proR hydrogen from 5-enolpyruvylshikimate-3-phosphate (EPSP) to yield chorismate, which is the branch point compound that serves as the starting substrate for the three terminal pathways of aromatic amino acid biosynthesis. This reaction introduces a second double bond into the aromatic ring system. This is Chorismate synthase 1 from Bacillus cereus (strain ZK / E33L).